The following is a 376-amino-acid chain: 5-hydroxytryptamine receptor 1D (376 aa).

The interval 1-22 is disordered; sequence MSPPNQSEEGLPQEASNRSLNA. Residues Asn-5, Asn-17, and Asn-21 are each glycosylated (N-linked (GlcNAc...) asparagine). 3 consecutive transmembrane segments (helical) span residues 39 to 64, 76 to 97, and 110 to 134; these read VSLVVVLSIITLATVLSNAFVLTTIL, LIGSLATTDLLVSILVMPISIA, and LCDIWVSSDITCCTASILHLCVIAL. Residues Cys-111 and Cys-188 are joined by a disulfide bond. Residues Asp-118 and Cys-122 each contribute to the serotonin site. The DRY motif; important for ligand-induced conformation changes motif lies at 135 to 137; it reads DRY. Transmembrane regions (helical) follow at residues 155–176, 195–218, 300–325, and 335–358; these read AGAMIAAVWVISICISIPPLFW, ISYTIYSTCGAFYIPSVLLIILYS, KTLGIILGAFIVCWLPFFVVSLVLPI, and ALFDFFTWLGYLNSLINPIIYTVF. Ser-320 serves as a coordination point for serotonin. The NPxxY motif; important for ligand-induced conformation changes and signaling signature appears at 351-355; the sequence is NPIIY.

The protein belongs to the G-protein coupled receptor 1 family. In terms of assembly, homodimer. Heterodimer with HTR1B.

The protein resides in the cell membrane. Functionally, G-protein coupled receptor for 5-hydroxytryptamine (serotonin). Also functions as a receptor for ergot alkaloid derivatives, various anxiolytic and antidepressant drugs and other psychoactive substances. Ligand binding causes a conformation change that triggers signaling via guanine nucleotide-binding proteins (G proteins) and modulates the activity of downstream effectors, such as adenylate cyclase. HTR1D is coupled to G(i)/G(o) G alpha proteins and mediates inhibitory neurotransmission by inhibiting adenylate cyclase activity. Regulates the release of 5-hydroxytryptamine in the brain, and thereby affects neural activity. May also play a role in regulating the release of other neurotransmitters. May play a role in vasoconstriction. The chain is 5-hydroxytryptamine receptor 1D (HTR1D) from Cavia porcellus (Guinea pig).